The sequence spans 225 residues: MENILQNDWGPLLGPEFEKEYYQNLANFLKEEYEEHVIYPKVEDIFNALQYTSYENTKVVILGQDPYHGPNQAHGLSFSVQPGIKTPPSLLNMYKELRDEYGYEIPNNGYLVKWAEQGVLLLNTVLTVRQGEANSHKGKGWEHFTDRVIELLNEREKPVIFILWGRHAQAKKKLITNTSHRIIESVHPSPLSARRGFFGSKPYSKVNTILANMGEREIDWEIPNL.

Asp65 (proton acceptor) is an active-site residue.

The protein belongs to the uracil-DNA glycosylase (UDG) superfamily. UNG family.

It localises to the cytoplasm. It catalyses the reaction Hydrolyzes single-stranded DNA or mismatched double-stranded DNA and polynucleotides, releasing free uracil.. In terms of biological role, excises uracil residues from the DNA which can arise as a result of misincorporation of dUMP residues by DNA polymerase or due to deamination of cytosine. The polypeptide is Uracil-DNA glycosylase (Bacillus mycoides (strain KBAB4) (Bacillus weihenstephanensis)).